The sequence spans 112 residues: Urease subunit beta (112 aa).

Belongs to the urease beta subunit family. In terms of assembly, heterotrimer of UreA (gamma), UreB (beta) and UreC (alpha) subunits. Three heterotrimers associate to form the active enzyme.

The protein resides in the cytoplasm. It carries out the reaction urea + 2 H2O + H(+) = hydrogencarbonate + 2 NH4(+). Its pathway is nitrogen metabolism; urea degradation; CO(2) and NH(3) from urea (urease route): step 1/1. In Thioalkalivibrio sulfidiphilus (strain HL-EbGR7), this protein is Urease subunit beta.